The following is a 396-amino-acid chain: Phosphoglycerate kinase (396 aa).

Residues 21 to 23 (DFN), R37, 60 to 63 (HLGR), R121, and R154 each bind substrate. Residues K205, G296, E327, and 353–356 (GGDS) each bind ATP.

It belongs to the phosphoglycerate kinase family. In terms of assembly, monomer.

It localises to the cytoplasm. The catalysed reaction is (2R)-3-phosphoglycerate + ATP = (2R)-3-phospho-glyceroyl phosphate + ADP. The protein operates within carbohydrate degradation; glycolysis; pyruvate from D-glyceraldehyde 3-phosphate: step 2/5. The sequence is that of Phosphoglycerate kinase from Anaeromyxobacter dehalogenans (strain 2CP-C).